A 335-amino-acid chain; its full sequence is 2-keto-3-deoxygluconate permease (335 aa).

The next 10 helical transmembrane spans lie at 10–30, 42–62, 77–97, 100–120, 141–161, 163–183, 200–220, 224–244, 254–274, and 289–309; these read IPGGLMLVPLLLGAILHTAAP, GIITGTLPILSVWFFCIGASI, LVLTKIAVAWVVALIAAQLLP, GIEVGMLAGLSTLALVSAMDM, AFVLMSVESGPLMTMVILGSA, LASFQPHHFVGAVLPFLIGFA, QTLIPFFGFALGNTINLGVIL, LLGIAMGLLVIVVTGIPLIIA, TAGLAASSTAGAAVANPVIIA, and ALVATCVIVTSILVPILTAMY.

This sequence belongs to the KdgT transporter family.

It localises to the cell inner membrane. It carries out the reaction 2-dehydro-3-deoxy-D-gluconate(in) + H(+)(in) = 2-dehydro-3-deoxy-D-gluconate(out) + H(+)(out). Its function is as follows. Catalyzes the proton-dependent uptake of 2-keto-3-deoxygluconate (KDG) into the cell. The polypeptide is 2-keto-3-deoxygluconate permease (Tolumonas auensis (strain DSM 9187 / NBRC 110442 / TA 4)).